The chain runs to 440 residues: Chromosome partition protein MukF (440 aa).

The segment at 208–236 (LSETSGTLRELQDTLEAAGDKLQANLLRI) is leucine-zipper.

Belongs to the MukF family. As to quaternary structure, interacts, and probably forms a ternary complex, with MukE and MukB via its C-terminal region. The complex formation is stimulated by calcium or magnesium. It is required for an interaction between MukE and MukB.

The protein resides in the cytoplasm. It is found in the nucleoid. Functionally, involved in chromosome condensation, segregation and cell cycle progression. May participate in facilitating chromosome segregation by condensation DNA from both sides of a centrally located replisome during cell division. Not required for mini-F plasmid partitioning. Probably acts via its interaction with MukB and MukE. Overexpression results in anucleate cells. It has a calcium binding activity. The sequence is that of Chromosome partition protein MukF from Escherichia coli O17:K52:H18 (strain UMN026 / ExPEC).